Consider the following 202-residue polypeptide: 3-isopropylmalate dehydratase small subunit (202 aa).

This sequence belongs to the LeuD family. LeuD type 1 subfamily. In terms of assembly, heterodimer of LeuC and LeuD.

The catalysed reaction is (2R,3S)-3-isopropylmalate = (2S)-2-isopropylmalate. The protein operates within amino-acid biosynthesis; L-leucine biosynthesis; L-leucine from 3-methyl-2-oxobutanoate: step 2/4. Functionally, catalyzes the isomerization between 2-isopropylmalate and 3-isopropylmalate, via the formation of 2-isopropylmaleate. This is 3-isopropylmalate dehydratase small subunit from Buchnera aphidicola subsp. Pemphigus spyrothecae.